The primary structure comprises 169 residues: Ribosome maturation factor RimM (169 aa).

The region spanning 94–166 (EEGFYDHELE…TATITPPDGL (73 aa)) is the PRC barrel domain.

Belongs to the RimM family. As to quaternary structure, binds ribosomal protein uS19.

It is found in the cytoplasm. An accessory protein needed during the final step in the assembly of 30S ribosomal subunit, possibly for assembly of the head region. Essential for efficient processing of 16S rRNA. May be needed both before and after RbfA during the maturation of 16S rRNA. It has affinity for free ribosomal 30S subunits but not for 70S ribosomes. This is Ribosome maturation factor RimM from Corynebacterium efficiens (strain DSM 44549 / YS-314 / AJ 12310 / JCM 11189 / NBRC 100395).